A 493-amino-acid chain; its full sequence is 2-amino-4-deoxychorismate synthase (493 aa).

This sequence belongs to the anthranilate synthase component I family. Mg(2+) serves as cofactor.

The enzyme catalyses (2S)-2-amino-4-deoxychorismate + L-glutamate = chorismate + L-glutamine. Functionally, converts chorismate to 2-amino-4-deoxychorismate (ADIC). Involved in the biosynthesis of the benzoxazolinate moiety of the enediyne antitumor antibiotic C-1027. This is 2-amino-4-deoxychorismate synthase (sgcD) from Streptomyces globisporus.